The following is a 352-amino-acid chain: MAGGGGRPCSPQRALLGMVAIMAVVAEARWGAPGRARAAPEEDQISVGFFRKNVIYGNVRRAENVYVKMFTNSPSLVCMDLSLSQEEIIDPKYSWTGPDGRNLEGRGYANLTGSGELMLVGFQESMSGAYTCTLSHRIIETSAQEEVDVRDTYRFMVYAYREANHVYQVSVRFTAKGCELAANARFVEELKKIMESLISDLTCGVKGPSYRCHSLEAPHRGSPSELFITFQVNPFAPGWEDLCSRLPQDCEDTTNRRAQEATERIGEFFRKQTYALKHQFQTVPTIHYVEGSFSVTPIDSCRPGFGRNNITHRSCAGCCVVCSPGTYSPDSAGSCRVCAGRRTAGYGAKSCP.

The signal sequence occupies residues 1–28; sequence MAGGGGRPCSPQRALLGMVAIMAVVAEA. N-linked (GlcNAc...) asparagine glycans are attached at residues Asn-110 and Asn-309.

It belongs to the zona pellucida-binding protein Sp38 family.

The protein resides in the secreted. The protein localises to the cytoplasmic vesicle. It localises to the secretory vesicle. Its subcellular location is the acrosome. May be implicated in the gamete interaction during fertilization. The sequence is that of Zona pellucida-binding protein 2 (ZPBP2) from Gallus gallus (Chicken).